Consider the following 122-residue polypeptide: Large ribosomal subunit protein uL14 (122 aa).

This sequence belongs to the universal ribosomal protein uL14 family. Part of the 50S ribosomal subunit. Forms a cluster with proteins L3 and L19. In the 70S ribosome, L14 and L19 interact and together make contacts with the 16S rRNA in bridges B5 and B8.

Its function is as follows. Binds to 23S rRNA. Forms part of two intersubunit bridges in the 70S ribosome. This Xylella fastidiosa (strain 9a5c) protein is Large ribosomal subunit protein uL14.